Consider the following 238-residue polypeptide: Isoamyl acetate-hydrolyzing esterase (238 aa).

The active-site Nucleophile is the serine 12. The active-site Proton donor is the aspartate 187. Histidine 190 (proton acceptor) is an active-site residue.

This sequence belongs to the 'GDSL' lipolytic enzyme family. IAH1 subfamily. Homodimer.

The catalysed reaction is 3-methylbutyl acetate + H2O = 3-methylbutanol + acetate + H(+). Plays a crucial role in the hydrolysis of isoamyl acetate in sake mash. Hydrolyzes short chain esters from acetate (C2) to hexanoate (C6), showing more specificity for shorter chain exters. No activity for decanoate (C10) esters. The chain is Isoamyl acetate-hydrolyzing esterase from Saccharomyces cerevisiae (strain ATCC 204508 / S288c) (Baker's yeast).